The sequence spans 335 residues: Glycerol-3-phosphate dehydrogenase [NAD(P)+] (335 aa).

NADPH contacts are provided by Ser15, Tyr16, His36, and Lys110. Residues Lys110, Gly139, and Thr141 each coordinate sn-glycerol 3-phosphate. Ala143 contacts NADPH. Lys195, Asp248, Ser258, Arg259, and Asn260 together coordinate sn-glycerol 3-phosphate. Lys195 acts as the Proton acceptor in catalysis. NADPH is bound at residue Arg259. Residues Val283 and Glu285 each contribute to the NADPH site.

This sequence belongs to the NAD-dependent glycerol-3-phosphate dehydrogenase family.

Its subcellular location is the cytoplasm. It catalyses the reaction sn-glycerol 3-phosphate + NAD(+) = dihydroxyacetone phosphate + NADH + H(+). The enzyme catalyses sn-glycerol 3-phosphate + NADP(+) = dihydroxyacetone phosphate + NADPH + H(+). The protein operates within membrane lipid metabolism; glycerophospholipid metabolism. Functionally, catalyzes the reduction of the glycolytic intermediate dihydroxyacetone phosphate (DHAP) to sn-glycerol 3-phosphate (G3P), the key precursor for phospholipid synthesis. The chain is Glycerol-3-phosphate dehydrogenase [NAD(P)+] from Mannheimia succiniciproducens (strain KCTC 0769BP / MBEL55E).